Here is a 632-residue protein sequence, read N- to C-terminus: MTNQQMPSGHSLERQPLSLLCLAALGVVYGDIGTSPLYVMKTVFDPIHGLAVTESNVIGIISLIFWTIMIVVSLKYVTLILRADNHGEGGIMALLSLASSSVTDRPRLHNILFLIGAFGAALFFGDGVITPAISVLSAVEGLEVATPLLQPYVLPITVVVLIALFMLQQRGTGGIGALFGPVMVIWFVSLGLVGLINIAGAPQIVAAFNPMYAFAFCISNGWLAFIALGAVVLAVTGGEALYADMGHFGAKPIRLAWYGGVLPALTLNYLGQGALLLANPAAISNPFFLLFPSWALYGAVGLATAATVIASQSVISGVFSVTRQAIQLGFLPRMQIRHTSERKIGQIYIPFVNWTLLSVVLMAVLGFGSSSNLASAYGVAVTTTMVIETTLTFFVLRYVWNYPFLLGILVTAFFLAIDSAFFSATILKVAQGGWFPLVIGSVIFFIMITWSRGRQMLVDHLRSVAIPLQSFLESLIAHPPTRVAGTSVFLTANPDGVPHALLHNLAHNQVLHERVVFLTVTYQETPWVPVEQRISIKPLMENCYQITVRYGFKDEANLPYALELCEPHGLVFEPLRTSYFLSREIVVPSPGTGMSLWRERLFAAMVRNASNAAEYFKLPANRVLELGARVEI.

A run of 12 helical transmembrane segments spans residues 19–39 (LLCL…PLYV), 57–77 (VIGI…LKYV), 111–131 (ILFL…VITP), 147–167 (PLLQ…LFML), 175–195 (IGAL…LVGL), 213–233 (AFAF…AVVL), 257–277 (WYGG…ALLL), 286–306 (PFFL…ATAA), 347–367 (IYIP…VLGF), 376–396 (AYGV…FFVL), 404–424 (FLLG…FFSA), and 429–449 (VAQG…IMIT).

This sequence belongs to the HAK/KUP transporter (TC 2.A.72) family.

The protein localises to the cell inner membrane. It carries out the reaction K(+)(in) + H(+)(in) = K(+)(out) + H(+)(out). Transport of potassium into the cell. Likely operates as a K(+):H(+) symporter. The polypeptide is Probable potassium transport system protein Kup (Nitrosospira multiformis (strain ATCC 25196 / NCIMB 11849 / C 71)).